Here is a 336-residue protein sequence, read N- to C-terminus: Dihydroorotate dehydrogenase (quinone) (336 aa).

Residues 62-66 and T86 each bind FMN; that span reads AGLEK. Position 66 (K66) interacts with substrate. 111–115 provides a ligand contact to substrate; sequence NRMGF. FMN-binding residues include N139 and N172. N172 contributes to the substrate binding site. S175 (nucleophile) is an active-site residue. N177 contacts substrate. FMN-binding residues include K217 and T245. Substrate is bound at residue 246 to 247; that stretch reads NT. Residues G268, G297, and 318-319 each bind FMN; that span reads YS.

This sequence belongs to the dihydroorotate dehydrogenase family. Type 2 subfamily. As to quaternary structure, monomer. FMN serves as cofactor.

It localises to the cell membrane. It catalyses the reaction (S)-dihydroorotate + a quinone = orotate + a quinol. Its pathway is pyrimidine metabolism; UMP biosynthesis via de novo pathway; orotate from (S)-dihydroorotate (quinone route): step 1/1. Functionally, catalyzes the conversion of dihydroorotate to orotate with quinone as electron acceptor. The polypeptide is Dihydroorotate dehydrogenase (quinone) (Aliivibrio salmonicida (strain LFI1238) (Vibrio salmonicida (strain LFI1238))).